The primary structure comprises 97 residues: Large ribosomal subunit protein bL27 (97 aa).

Positions 1–12 (MLKMNLANLQLF) are excised as a propeptide. Residues 14 to 37 (HKKGGGSTSNGRDSQAKRLGAKAA) are disordered.

The protein belongs to the bacterial ribosomal protein bL27 family. In terms of processing, the N-terminus is cleaved by ribosomal processing cysteine protease Prp.

The sequence is that of Large ribosomal subunit protein bL27 from Streptococcus gordonii (strain Challis / ATCC 35105 / BCRC 15272 / CH1 / DL1 / V288).